A 152-amino-acid chain; its full sequence is Proteolipid protein 2 (152 aa).

Asn18 is a glycosylation site (N-linked (GlcNAc...) asparagine). Residues 19 to 137 (FSRTRKGILL…DAYVTFPVRQ (119 aa)) enclose the MARVEL domain. 3 helical membrane passes run 25–45 (GILL…FSAS), 48–68 (GYSS…VVYM), and 85–105 (FFRT…VLVE). Asn108 carries an N-linked (GlcNAc...) asparagine glycan. Residues 112-132 (IVAGVLGLIATCLFGYDAYVT) traverse the membrane as a helical segment.

Enriched in colonic mucosa. The expression of A4 follows a gradient along the crypto-villus axis with the most abundant message occurring in the lower half of the crypt.

The protein resides in the membrane. In terms of biological role, may play a role in cell differentiation in the intestinal epithelium. This is Proteolipid protein 2 (PLP2) from Homo sapiens (Human).